The primary structure comprises 262 residues: Protein N-terminal and lysine N-methyltransferase EFM7 (262 aa).

S-adenosyl-L-methionine contacts are provided by residues Trp59, 86 to 88, Asp108, Trp143, and Ser171; that span reads GAA.

This sequence belongs to the class I-like SAM-binding methyltransferase superfamily. EFM7 family.

The protein localises to the cytoplasm. Functionally, S-adenosyl-L-methionine-dependent protein methyltransferase that trimethylates the N-terminal glycine 'Gly-2' of elongation factor 1-alpha, before also catalyzing the mono- and dimethylation of 'Lys-3'. In Candida albicans (strain SC5314 / ATCC MYA-2876) (Yeast), this protein is Protein N-terminal and lysine N-methyltransferase EFM7.